We begin with the raw amino-acid sequence, 652 residues long: Set1 complex component ash2 (652 aa).

Positions Met-1–Glu-32 are disordered. Over residues Gly-15–Glu-32 the composition is skewed to polar residues. Residues Asn-40–Asp-94 form a PHD-type zinc finger. Residues Cys-43, Cys-45, Cys-58, Cys-61, His-66, Cys-69, Cys-88, and Cys-91 each contribute to the Zn(2+) site. A disordered region spans residues Arg-234–Ser-270. Over residues Lys-247–Arg-261 the composition is skewed to basic and acidic residues. A B30.2/SPRY domain is found at Glu-330–Tyr-519.

This sequence belongs to the cclA family. Component of the Set1 complex composed of ash2, sdc1, set1, shg1, spp1, swd1, swd2 and swd3. Component of the Lid2 complex composed of ash2, jmj3, lid2, sdc1 and snt2.

The protein resides in the nucleus. Its function is as follows. Component of the COMPASS (Set1C) complex that specifically mono-, di- and trimethylates histone H3 to form H3K4me1/2/3, which subsequently plays a role in telomere length maintenance and transcription elongation regulation. Regulates MAPK pathway and sporulation through H3K4 methylation. The protein is Set1 complex component ash2 of Schizosaccharomyces pombe (strain 972 / ATCC 24843) (Fission yeast).